Reading from the N-terminus, the 344-residue chain is Phenylalanine--tRNA ligase alpha subunit (344 aa).

Glu-256 is a binding site for Mg(2+).

The protein belongs to the class-II aminoacyl-tRNA synthetase family. Phe-tRNA synthetase alpha subunit type 1 subfamily. As to quaternary structure, tetramer of two alpha and two beta subunits. It depends on Mg(2+) as a cofactor.

Its subcellular location is the cytoplasm. The enzyme catalyses tRNA(Phe) + L-phenylalanine + ATP = L-phenylalanyl-tRNA(Phe) + AMP + diphosphate + H(+). The sequence is that of Phenylalanine--tRNA ligase alpha subunit from Bacillus licheniformis (strain ATCC 14580 / DSM 13 / JCM 2505 / CCUG 7422 / NBRC 12200 / NCIMB 9375 / NCTC 10341 / NRRL NRS-1264 / Gibson 46).